Here is a 147-residue protein sequence, read N- to C-terminus: Histone-lysine N-methyltransferase, H3 lysine-37 specific (147 aa).

The SET domain maps to 8 to 116; sequence SPLEIRDTER…TNEELCISYG (109 aa).

It belongs to the class V-like SAM-binding methyltransferase superfamily. In terms of assembly, homodimer.

The protein resides in the cytoplasm. Its subcellular location is the nucleus. The enzyme catalyses L-lysyl(37)-[histone H3] + S-adenosyl-L-methionine = N(6)-methyl-L-lysyl(37)-[histone H3] + S-adenosyl-L-homocysteine + H(+). It catalyses the reaction N(6)-methyl-L-lysyl(37)-[histone H3] + S-adenosyl-L-methionine = N(6),N(6)-dimethyl-L-lysyl(37)-[histone H3] + S-adenosyl-L-homocysteine + H(+). It carries out the reaction N(6),N(6)-dimethyl-L-lysyl(37)-[histone H3] + S-adenosyl-L-methionine = N(6),N(6),N(6)-trimethyl-L-lysyl(37)-[histone H3] + S-adenosyl-L-homocysteine + H(+). In terms of biological role, histone lysine methyltransferase that specifically mono-, di-, and trimethylates 'Lys-37' of histone H3 to regulate sporulation. The protein is Histone-lysine N-methyltransferase, H3 lysine-37 specific of Schizosaccharomyces pombe (strain 972 / ATCC 24843) (Fission yeast).